The primary structure comprises 421 residues: Divalent metal cation transporter MntH (421 aa).

11 helical membrane passes run 27 to 47, 51 to 71, 100 to 120, 128 to 148, 160 to 180, 201 to 221, 248 to 268, 289 to 309, 337 to 357, 358 to 378, and 396 to 416; these read LGPAFIVSVAYVDPGNFATNI, SLFDYHLIWVILWSNVIAIFL, WFLWITAELAAMATDLAEFLG, LFHIPMTYAAFLTGVVTFAIV, GIIFGLVAVISLAYAFELFIA, AMLIAVGILGATVMPHVIYLH, ILVAMNTAFIINAAMLIVSAA, PLLGVFSSWAFGIALLASGFS, LVTMVPAITIIALGIDPLKSL, IVSQVVLSFELPMAIIPLLLI, and IMGVLVASFVMILNGLLLYLT.

Belongs to the NRAMP family.

The protein localises to the cell membrane. Functionally, h(+)-stimulated, divalent metal cation uptake system. The sequence is that of Divalent metal cation transporter MntH from Caldanaerobacter subterraneus subsp. tengcongensis (strain DSM 15242 / JCM 11007 / NBRC 100824 / MB4) (Thermoanaerobacter tengcongensis).